Here is a 245-residue protein sequence, read N- to C-terminus: Phosphoribosylaminoimidazole-succinocarboxamide synthase (245 aa).

It belongs to the SAICAR synthetase family.

The catalysed reaction is 5-amino-1-(5-phospho-D-ribosyl)imidazole-4-carboxylate + L-aspartate + ATP = (2S)-2-[5-amino-1-(5-phospho-beta-D-ribosyl)imidazole-4-carboxamido]succinate + ADP + phosphate + 2 H(+). Its pathway is purine metabolism; IMP biosynthesis via de novo pathway; 5-amino-1-(5-phospho-D-ribosyl)imidazole-4-carboxamide from 5-amino-1-(5-phospho-D-ribosyl)imidazole-4-carboxylate: step 1/2. The chain is Phosphoribosylaminoimidazole-succinocarboxamide synthase from Trichormus variabilis (strain ATCC 29413 / PCC 7937) (Anabaena variabilis).